The chain runs to 241 residues: uncharacterized protein (241 aa).

In terms of domain architecture, GGDEF spans Thr-84–Asp-216. Residues Arg-215–Pro-241 are disordered. Over residues His-231–Pro-241 the composition is skewed to basic residues.

This is an uncharacterized protein from Streptomyces griseus.